The chain runs to 327 residues: Zinc transport protein ZntB (327 aa).

Residues 1–273 (MEAIKGSDVN…ARRTYTMSLM (273 aa)) lie on the Cytoplasmic side of the membrane. The helical transmembrane segment at 274-294 (AMVFLPSTFLTGLFGVNLGGI) threads the bilayer. Over 295-300 (PGGGWQ) the chain is Periplasmic. Residues 301 to 321 (FGFSIFCILLVVLIGGVALWL) form a helical membrane-spanning segment. Residues 322 to 327 (YRSKWL) lie on the Cytoplasmic side of the membrane.

It belongs to the CorA metal ion transporter (MIT) (TC 1.A.35) family.

The protein localises to the cell inner membrane. It catalyses the reaction Zn(2+)(out) + H(+)(out) = Zn(2+)(in) + H(+)(in). Zinc transporter. Acts as a Zn(2+):proton symporter, which likely mediates zinc ion uptake. The polypeptide is Zinc transport protein ZntB (Shigella flexneri serotype 5b (strain 8401)).